The following is a 64-amino-acid chain: Small ribosomal subunit protein bS21 (64 aa).

This sequence belongs to the bacterial ribosomal protein bS21 family.

The chain is Small ribosomal subunit protein bS21 from Amoebophilus asiaticus (strain 5a2).